A 794-amino-acid chain; its full sequence is Potassium transporter 2 (794 aa).

Residues 1-21 (MDLNLGKCCGSRSSKKESWRS) are Cytoplasmic-facing. Residues 22–42 (VLLLAYQSLGVVYGDLSISPL) form a helical membrane-spanning segment. Over 43–64 (YVFKSTFAEDIQHSETNEEIYG) the chain is Extracellular. A helical membrane pass occupies residues 65–85 (VMSFVFWTLTLVPLLKYVFIV). Residues 86–153 (LRADDNGEGG…EKHKWLHTAL (68 aa)) are Cytoplasmic-facing. A helical membrane pass occupies residues 154-174 (LLLVLLGTCMVIGDGLLTPAI). At 175 to 193 (SVFSAVSGLELNMSKEHHQ) the chain is on the extracellular side. The helical transmembrane segment at 194-214 (YAVIPITCFILVCLFSLQHFG) threads the bilayer. The Cytoplasmic portion of the chain corresponds to 215–217 (THR). A helical membrane pass occupies residues 218 to 238 (VGFVFAPIVLTWLLCISGIGL). Topologically, residues 239–265 (YNIIQWNPHIYKALSPTYMFMFLRKTR) are extracellular. A helical transmembrane segment spans residues 266-286 (VSGWMSLGGILLCITGAEAMF). Residues 287–294 (ADLGHFNY) are Cytoplasmic-facing. The helical transmembrane segment at 295 to 315 (AAIQIAFTFLVYPALILAYMG) threads the bilayer. Over 316–339 (QAAYLSRHHHSAHAIGFYVSVPKC) the chain is Extracellular. Residues 340–360 (LHWPVLAVAILASVVGSQAII) traverse the membrane as a helical segment. Residues 361 to 391 (SGTFSIINQSQSLGCFPRVKVIHTSDKMHGQ) lie on the Cytoplasmic side of the membrane. A helical transmembrane segment spans residues 392-412 (IYIPEINWMLMILCIAVTIGF). Over 413–417 (RDVKH) the chain is Extracellular. 2 helical membrane passes run 418 to 438 (LGNASGLAVMAVMLVTTCLTS) and 439 to 459 (LVIVLCWHKPPILALAFLLFF). The Extracellular segment spans residues 460–476 (GSIELLYFSASLTKFRE). Residues 477 to 497 (GAWLPILLSLIFMIIMFVWHY) traverse the membrane as a helical segment. Topologically, residues 498–794 (TTIKKYEFDL…LLEVGMVYVV (297 aa)) are cytoplasmic.

This sequence belongs to the HAK/KUP transporter (TC 2.A.72.3) family. Slightly detected in roots, stems, leaves and flowers of mature plants and in potassium-starved plants.

The protein resides in the cell membrane. Its function is as follows. Low-affinity potassium transporter. Could mediate the potassium-dependent cell expansion in growing tissues. This chain is Potassium transporter 2 (POT2), found in Arabidopsis thaliana (Mouse-ear cress).